The primary structure comprises 187 residues: MSGGVKLIAGLGNPGDQYARTRHNVGAWFLETLAQQRNQSLAKENKFHGFVAKCNDYWLLKPTTFMNESGQAVAALAHFYKIKPSEILIAHDELDFPAGDIRLKEGGGHGGHNGLRNIIQHLGSSDFYRLRIGINHPGHKDRVTPYVLSPPSENDRIAILAAIEKGLRLIPELVQGDFQKVMRELHS.

Position 18 (Tyr18) interacts with tRNA. Catalysis depends on His23, which acts as the Proton acceptor. TRNA is bound by residues Phe65, Asn67, and Asn113.

This sequence belongs to the PTH family. Monomer.

It localises to the cytoplasm. It carries out the reaction an N-acyl-L-alpha-aminoacyl-tRNA + H2O = an N-acyl-L-amino acid + a tRNA + H(+). Hydrolyzes ribosome-free peptidyl-tRNAs (with 1 or more amino acids incorporated), which drop off the ribosome during protein synthesis, or as a result of ribosome stalling. In terms of biological role, catalyzes the release of premature peptidyl moieties from peptidyl-tRNA molecules trapped in stalled 50S ribosomal subunits, and thus maintains levels of free tRNAs and 50S ribosomes. The polypeptide is Peptidyl-tRNA hydrolase (Coxiella burnetii (strain RSA 331 / Henzerling II)).